The chain runs to 188 residues: Adenine phosphoribosyltransferase (188 aa).

Belongs to the purine/pyrimidine phosphoribosyltransferase family. As to quaternary structure, homodimer.

Its subcellular location is the cytoplasm. The catalysed reaction is AMP + diphosphate = 5-phospho-alpha-D-ribose 1-diphosphate + adenine. The protein operates within purine metabolism; AMP biosynthesis via salvage pathway; AMP from adenine: step 1/1. Functionally, catalyzes a salvage reaction resulting in the formation of AMP, that is energically less costly than de novo synthesis. This chain is Adenine phosphoribosyltransferase, found in Salinispora tropica (strain ATCC BAA-916 / DSM 44818 / JCM 13857 / NBRC 105044 / CNB-440).